The sequence spans 295 residues: Protoheme IX farnesyltransferase (295 aa).

Topologically, residues 1-9 are cytoplasmic; it reads MSVKHFIQI. The helical transmembrane segment at 10–28 threads the bilayer; that stretch reads TKPGIIFGNVLSVAGGFFL. Residues 29-37 lie on the Periplasmic side of the membrane; that stretch reads ASKGHVDFA. Residues 38 to 56 traverse the membrane as a helical segment; sequence LFLAVVIGTSLVVASGCVF. The Cytoplasmic segment spans residues 57-78; that stretch reads NNCIDRDIDHKMERTKNRVMVQ. The chain crosses the membrane as a helical span at residues 79–97; that stretch reads GGMSLPLALIYATLLGVAG. The Periplasmic segment spans residues 98–107; sequence FSLLYVQANP. Residues 108-126 traverse the membrane as a helical segment; it reads LSAFCALIGFIVYVGFYSL. The Cytoplasmic portion of the chain corresponds to 127–197; the sequence is WLKRKSVHGT…YSAANIPVLP (71 aa). A helical membrane pass occupies residues 198–216; sequence VARGILAAKKQIVLYVLAF. The Periplasmic segment spans residues 217-228; the sequence is VLATLMLTLGGY. Residues 229–247 form a helical membrane-spanning segment; the sequence is AGLGYLAVAAAMGLYWLYM. Residues 248–268 are Cytoplasmic-facing; sequence AWGGYKAEDDSKWARKVFGFS. The chain crosses the membrane as a helical span at residues 269–287; sequence ILTVTALSVMMGVDSQTAA. Over 288–295 the chain is Periplasmic; the sequence is DVLMTYAR.

This sequence belongs to the UbiA prenyltransferase family. Mg(2+) serves as cofactor. Requires Ca(2+) as cofactor.

The protein localises to the cell inner membrane. It carries out the reaction heme b + (2E,6E)-farnesyl diphosphate + H2O = Fe(II)-heme o + diphosphate. Functionally, converts protoheme IX and farnesyl diphosphate to heme O. This Pseudomonas putida (Arthrobacter siderocapsulatus) protein is Protoheme IX farnesyltransferase (cyoE).